The primary structure comprises 139 residues: Acidic phospholipase A2 5 (139 aa).

The first 16 residues, 1–16, serve as a signal peptide directing secretion; the sequence is MRTLWIVAVWLMGVEG. 7 cysteine pairs are disulfide-bonded: Cys-42–Cys-131, Cys-44–Cys-60, Cys-59–Cys-111, Cys-65–Cys-139, Cys-66–Cys-104, Cys-73–Cys-97, and Cys-91–Cys-102. Ca(2+) is bound by residues Tyr-43, Gly-45, and Gly-47. His-63 is a catalytic residue. Position 64 (Asp-64) interacts with Ca(2+). Asp-105 is a catalytic residue.

It belongs to the phospholipase A2 family. Group II subfamily. D49 sub-subfamily. Requires Ca(2+) as cofactor. In terms of tissue distribution, expressed by the venom gland.

It localises to the secreted. The enzyme catalyses a 1,2-diacyl-sn-glycero-3-phosphocholine + H2O = a 1-acyl-sn-glycero-3-phosphocholine + a fatty acid + H(+). Its function is as follows. PLA2 catalyzes the calcium-dependent hydrolysis of the 2-acyl groups in 3-sn-phosphoglycerides. The protein is Acidic phospholipase A2 5 of Echis pyramidum leakeyi (Leakey's carpet viper).